The primary structure comprises 609 residues: Alpha-fetoprotein (609 aa).

Residues 1–18 (MKWVVSILLIFLLNSTES) form the signal peptide. Albumin domains are found at residues 19 to 210 (RTMH…ATIT), 211 to 402 (KELR…EELQ), and 403 to 601 (KYIQ…QLIS). H22 is a Cu(2+) binding site. 8 disulfide bridges follow: C99/C114, C113/C124, C148/C193, C192/C201, C224/C270, C269/C277, C289/C303, and C302/C313. A phosphoserine mark is found at S111 and S115. An N-linked (GlcNAc...) asparagine glycan is attached at N251. S344 is modified (phosphoserine). Cystine bridges form between C384/C393, C416/C462, C461/C472, C485/C501, C500/C511, C538/C583, and C582/C591.

Belongs to the ALB/AFP/VDB family. In terms of assembly, dimeric and trimeric forms have been found in addition to the monomeric form. In terms of processing, sulfated. Plasma.

It localises to the secreted. Functionally, binds copper, nickel, and fatty acids as well as, and bilirubin less well than, serum albumin. The polypeptide is Alpha-fetoprotein (AFP) (Equus caballus (Horse)).